Consider the following 190-residue polypeptide: MEALHQKIREEGIVLSDQVLKVDAFLNHQIDPALMQLIGDEFARLFADAGVTKIVTIEASGIAPAVMTGLKLGVPVIFARKHQSLTLTENLLTASVYSFTKQTENTVAISPRHLNSSDRVLVIDDFLANGKASQALISIIKQAGATVAGLGIVIEKSFQGGRAELDSQGYRVESLARVKSLEGGVVSFIE.

Residues Leu-20 and Asn-27 each coordinate xanthine. 128–132 (ANGKA) is a binding site for 5-phospho-alpha-D-ribose 1-diphosphate. Residue Lys-156 coordinates xanthine.

Belongs to the purine/pyrimidine phosphoribosyltransferase family. Xpt subfamily. Homodimer.

It is found in the cytoplasm. It catalyses the reaction XMP + diphosphate = xanthine + 5-phospho-alpha-D-ribose 1-diphosphate. Its pathway is purine metabolism; XMP biosynthesis via salvage pathway; XMP from xanthine: step 1/1. Its function is as follows. Converts the preformed base xanthine, a product of nucleic acid breakdown, to xanthosine 5'-monophosphate (XMP), so it can be reused for RNA or DNA synthesis. The polypeptide is Xanthine phosphoribosyltransferase (Pseudomonas putida (strain ATCC 700007 / DSM 6899 / JCM 31910 / BCRC 17059 / LMG 24140 / F1)).